A 658-amino-acid chain; its full sequence is Threonine--tRNA ligase (658 aa).

The 64-residue stretch at 1 to 64 (MSCSISLSFP…GQSGQVEIIT (64 aa)) folds into the TGS domain. The interval 246-549 (DHRRLGREMD…LIENFAGHMP (304 aa)) is catalytic. Residues Cys-343, His-394, and His-526 each coordinate Zn(2+).

Belongs to the class-II aminoacyl-tRNA synthetase family. Homodimer. Zn(2+) serves as cofactor.

It localises to the cytoplasm. It catalyses the reaction tRNA(Thr) + L-threonine + ATP = L-threonyl-tRNA(Thr) + AMP + diphosphate + H(+). In terms of biological role, catalyzes the attachment of threonine to tRNA(Thr) in a two-step reaction: L-threonine is first activated by ATP to form Thr-AMP and then transferred to the acceptor end of tRNA(Thr). Also edits incorrectly charged L-seryl-tRNA(Thr). This Bartonella tribocorum (strain CIP 105476 / IBS 506) protein is Threonine--tRNA ligase.